The chain runs to 373 residues: tRNA (guanine(26)-N(2))-dimethyltransferase (373 aa).

The region spanning Lys-2–Ile-365 is the Trm1 methyltransferase domain. Positions 35, 66, 86, 113, and 114 each coordinate S-adenosyl-L-methionine.

Belongs to the class I-like SAM-binding methyltransferase superfamily. Trm1 family.

The enzyme catalyses guanosine(26) in tRNA + 2 S-adenosyl-L-methionine = N(2)-dimethylguanosine(26) in tRNA + 2 S-adenosyl-L-homocysteine + 2 H(+). Functionally, dimethylates a single guanine residue at position 26 of a number of tRNAs using S-adenosyl-L-methionine as donor of the methyl groups. The protein is tRNA (guanine(26)-N(2))-dimethyltransferase of Methanococcus maripaludis (Methanococcus deltae).